A 474-amino-acid polypeptide reads, in one-letter code: tRNA-2-methylthio-N(6)-dimethylallyladenosine synthase (474 aa).

In terms of domain architecture, MTTase N-terminal spans 3 to 120; the sequence is KKLHIKTWGC…LPEMINSVRG (118 aa). Positions 12, 49, 83, 157, 161, and 164 each coordinate [4Fe-4S] cluster. Residues 143–375 enclose the Radical SAM core domain; it reads RAEGPTAFVS…QERINQQAMA (233 aa). The TRAM domain occupies 378–441; it reads RRMLGTTQRI…PNSLRGKVVR (64 aa).

Belongs to the methylthiotransferase family. MiaB subfamily. In terms of assembly, monomer. Requires [4Fe-4S] cluster as cofactor.

The protein localises to the cytoplasm. It catalyses the reaction N(6)-dimethylallyladenosine(37) in tRNA + (sulfur carrier)-SH + AH2 + 2 S-adenosyl-L-methionine = 2-methylsulfanyl-N(6)-dimethylallyladenosine(37) in tRNA + (sulfur carrier)-H + 5'-deoxyadenosine + L-methionine + A + S-adenosyl-L-homocysteine + 2 H(+). In terms of biological role, catalyzes the methylthiolation of N6-(dimethylallyl)adenosine (i(6)A), leading to the formation of 2-methylthio-N6-(dimethylallyl)adenosine (ms(2)i(6)A) at position 37 in tRNAs that read codons beginning with uridine. The polypeptide is tRNA-2-methylthio-N(6)-dimethylallyladenosine synthase (Escherichia coli (strain SE11)).